We begin with the raw amino-acid sequence, 126 residues long: Small ribosomal subunit protein uS13 (126 aa).

A disordered region spans residues 101 to 126; it reads QKTKNNCRTRKGKKKTVANKKKKINK.

Belongs to the universal ribosomal protein uS13 family. Part of the 30S ribosomal subunit. Forms a loose heterodimer with protein S19. Forms two bridges to the 50S subunit in the 70S ribosome.

Functionally, located at the top of the head of the 30S subunit, it contacts several helices of the 16S rRNA. In the 70S ribosome it contacts the 23S rRNA (bridge B1a) and protein L5 of the 50S subunit (bridge B1b), connecting the 2 subunits; these bridges are implicated in subunit movement. Contacts the tRNAs in the A and P-sites. This chain is Small ribosomal subunit protein uS13, found in Karelsulcia muelleri (strain GWSS) (Sulcia muelleri).